The chain runs to 614 residues: Signal recognition particle receptor subunit alpha homolog (614 aa).

Residues 119-244 are disordered; the sequence is EASAKQVKAP…DRSRDSPDDV (126 aa). Basic and acidic residues predominate over residues 149–160; the sequence is QDDKKPVEKRVN. The span at 164–178 shows a compositional bias: pro residues; that stretch reads APPPSKSQPSSPPTG. A compositionally biased stretch (basic and acidic residues) spans 232 to 241; the sequence is ALLDRSRDSP. Ser-237 and Ser-240 each carry phosphoserine. Tyr-246 bears the Phosphotyrosine mark. Phosphoserine occurs at positions 268, 278, and 279. A compositionally biased stretch (acidic residues) spans 268-285; it reads SEDEADNEDASSEGEAEE. Residues 268–290 form a disordered region; that stretch reads SEDEADNEDASSEGEAEEQVQSK. Residues 396–613 form an NG domain region; that stretch reads YTIIFCGVNG…NVNAVVNSLM (218 aa). Residues 402-409, 497-501, and 565-568 contribute to the GTP site; these read GVNGVGKS, DTAGR, and TKFD.

It belongs to the GTP-binding SRP family. In terms of assembly, heterodimer of SrpRalpha and SrpRbeta. In 8-9 hours embryos, expression is seen in a segmental pattern along embryonic ventral midline.

Its subcellular location is the endoplasmic reticulum membrane. Its function is as follows. Component of the SRP (signal recognition particle) receptor. Ensures, in conjunction with the signal recognition particle, the correct targeting of the nascent secretory proteins to the endoplasmic reticulum membrane system. Forms a guanosine 5'-triphosphate (GTP)-dependent complex with the SRP subunit Srp54. SRP receptor compaction and GTPase rearrangement drive SRP-mediated cotranslational protein translocation into the ER. May have a role in axonogenesis. The chain is Signal recognition particle receptor subunit alpha homolog from Drosophila melanogaster (Fruit fly).